A 1262-amino-acid chain; its full sequence is Tau-tubulin kinase homolog Asator (1262 aa).

The interval 13 to 35 (NASAPDDGNQSCQPSSKQDQYLS) is disordered. A compositionally biased stretch (polar residues) spans 20–35 (GNQSCQPSSKQDQYLS). In terms of domain architecture, Protein kinase spans 173 to 436 (WKVVRKIGGG…MLIGLFERCM (264 aa)). ATP contacts are provided by residues 179–187 (IGGGGFGEI) and Lys-202. The Proton acceptor role is filled by Asp-293. Disordered regions lie at residues 662 to 724 (TVTN…TSNA), 755 to 792 (RSATSTNLRPSSSASQRINSGSTIGGAVGNGSNTARSS), and 984 to 1003 (KDSALQLNSTNDSLDKSRHR). Basic and acidic residues predominate over residues 667–679 (KTSEVNRSTEEQK). The segment covering 755 to 776 (RSATSTNLRPSSSASQRINSGS) has biased composition (polar residues).

The protein belongs to the protein kinase superfamily. CK1 Ser/Thr protein kinase family. In terms of assembly, interacts with Mgtor. Mg(2+) is required as a cofactor. Detected in larval brain.

It localises to the cytoplasm. The protein localises to the cytoskeleton. The protein resides in the spindle. The catalysed reaction is L-seryl-[protein] + ATP = O-phospho-L-seryl-[protein] + ADP + H(+). It carries out the reaction L-threonyl-[protein] + ATP = O-phospho-L-threonyl-[protein] + ADP + H(+). In terms of biological role, probable serine/threonine protein kinase. The sequence is that of Tau-tubulin kinase homolog Asator from Drosophila melanogaster (Fruit fly).